A 301-amino-acid polypeptide reads, in one-letter code: Pseudouridine-5'-phosphate glycosidase (301 aa).

Catalysis depends on Glu-23, which acts as the Proton donor. Positions 84 and 104 each coordinate substrate. Residue Asp-136 participates in Mn(2+) binding. Position 138–140 (138–140 (SRD)) interacts with substrate. Catalysis depends on Lys-157, which acts as the Nucleophile.

The protein belongs to the pseudouridine-5'-phosphate glycosidase family. As to quaternary structure, homotrimer. It depends on Mn(2+) as a cofactor.

The catalysed reaction is D-ribose 5-phosphate + uracil = psi-UMP + H2O. Its function is as follows. Catalyzes the reversible cleavage of pseudouridine 5'-phosphate (PsiMP) to ribose 5-phosphate and uracil. Functions biologically in the cleavage direction, as part of a pseudouridine degradation pathway. In Mycoplasmopsis agalactiae (strain NCTC 10123 / CIP 59.7 / PG2) (Mycoplasma agalactiae), this protein is Pseudouridine-5'-phosphate glycosidase.